The chain runs to 340 residues: Serpentine receptor class alpha-18 (340 aa).

The next 6 helical transmembrane spans lie at 29–49 (FNFIFIITVVLISYCFTWLAI), 109–129 (VFELYLYYPTGYFSTYSVFSL), 149–169 (FIATSLLVLQLLLTMFSFYIV), 198–218 (VRTGVMVSCIIVTMFVYYVCV), 249–269 (ISIVLQFSCIMISSFGSNLLI), and 285–305 (IVSFLPGVTYANLCLPLVIYF).

Belongs to the nematode receptor-like protein sra family.

It localises to the membrane. The chain is Serpentine receptor class alpha-18 (sra-18) from Caenorhabditis elegans.